The chain runs to 247 residues: Triosephosphate isomerase (247 aa).

Residues Asn10 and Lys12 each coordinate substrate. His94 (electrophile) is an active-site residue. Glu164 serves as the catalytic Proton acceptor.

The protein belongs to the triosephosphate isomerase family. As to quaternary structure, homodimer.

The enzyme catalyses D-glyceraldehyde 3-phosphate = dihydroxyacetone phosphate. It functions in the pathway carbohydrate biosynthesis; gluconeogenesis. The protein operates within carbohydrate degradation; glycolysis; D-glyceraldehyde 3-phosphate from glycerone phosphate: step 1/1. The protein is Triosephosphate isomerase (Tpi) of Culex tarsalis (Encephalitis mosquito).